Reading from the N-terminus, the 284-residue chain is Orotidine 5'-phosphate decarboxylase (284 aa).

Substrate-binding positions include D42, 64 to 66, 96 to 105, Y237, and R255; these read KTH and DRKFADIGNT. K98 acts as the Proton donor in catalysis.

This sequence belongs to the OMP decarboxylase family.

The enzyme catalyses orotidine 5'-phosphate + H(+) = UMP + CO2. The protein operates within pyrimidine metabolism; UMP biosynthesis via de novo pathway; UMP from orotate: step 2/2. This Magnusiomyces magnusii (Yeast) protein is Orotidine 5'-phosphate decarboxylase (URA3).